Consider the following 712-residue polypeptide: Effector protein HopM1 (712 aa).

The interval 22-58 (DTVPAQTAHPNAVTAGMNPPLTPDQSGSHATESSSAG) is disordered. The segment covering 44-57 (PDQSGSHATESSSA) has biased composition (polar residues).

Interacts with the chaperone ShcM. Interacts with host plant BIG5/ATMIN7.

The protein localises to the secreted. The protein resides in the host membrane. Functionally, involved in the suppression of basal resistance and promotion of disease symptoms in plants. Mediates the ubiquitination and degradation, via the host proteasome, of a low-abundance immunity-associated protein in Arabidopsis thaliana. May be involved in the inhibition of a host vesicle trafficking pathway. In Pseudomonas syringae pv. tomato (strain ATCC BAA-871 / DC3000), this protein is Effector protein HopM1 (hopM1).